Consider the following 352-residue polypeptide: Phosphoribosylformylglycinamidine cyclo-ligase (352 aa).

This sequence belongs to the AIR synthase family.

The protein localises to the cytoplasm. The enzyme catalyses 2-formamido-N(1)-(5-O-phospho-beta-D-ribosyl)acetamidine + ATP = 5-amino-1-(5-phospho-beta-D-ribosyl)imidazole + ADP + phosphate + H(+). The protein operates within purine metabolism; IMP biosynthesis via de novo pathway; 5-amino-1-(5-phospho-D-ribosyl)imidazole from N(2)-formyl-N(1)-(5-phospho-D-ribosyl)glycinamide: step 2/2. The protein is Phosphoribosylformylglycinamidine cyclo-ligase of Ectopseudomonas mendocina (strain ymp) (Pseudomonas mendocina).